A 51-amino-acid polypeptide reads, in one-letter code: ATP synthase F(1) complex subunit epsilon, mitochondrial (51 aa).

An N6-acetyllysine; alternate mark is found at Lys-21, Lys-32, and Lys-37. Lys-21, Lys-32, and Lys-37 each carry N6-succinyllysine; alternate. An N6-acetyllysine modification is found at Lys-44.

It belongs to the eukaryotic ATPase epsilon family. As to quaternary structure, component of the ATP synthase complex composed at least of ATP5F1A/subunit alpha, ATP5F1B/subunit beta, ATP5MC1/subunit c (homooctomer), MT-ATP6/subunit a, MT-ATP8/subunit 8, ATP5ME/subunit e, ATP5MF/subunit f, ATP5MG/subunit g, ATP5MK/subunit k, ATP5MJ/subunit j, ATP5F1C/subunit gamma, ATP5F1D/subunit delta, ATP5F1E/subunit epsilon, ATP5PF/subunit F6, ATP5PB/subunit b, ATP5PD/subunit d, ATP5PO/subunit OSCP. ATP synthase complex consists of a soluble F(1) head domain (subunits alpha(3) and beta(3)) - the catalytic core - and a membrane F(0) domain - the membrane proton channel (subunits c, a, 8, e, f, g, k and j). These two domains are linked by a central stalk (subunits gamma, delta, and epsilon) rotating inside the F1 region and a stationary peripheral stalk (subunits F6, b, d, and OSCP).

The protein localises to the mitochondrion. It localises to the mitochondrion inner membrane. Subunit epsilon, of the mitochondrial membrane ATP synthase complex (F(1)F(0) ATP synthase or Complex V) that produces ATP from ADP in the presence of a proton gradient across the membrane which is generated by electron transport complexes of the respiratory chain. ATP synthase complex consist of a soluble F(1) head domain - the catalytic core - and a membrane F(1) domain - the membrane proton channel. These two domains are linked by a central stalk rotating inside the F(1) region and a stationary peripheral stalk. During catalysis, ATP synthesis in the catalytic domain of F(1) is coupled via a rotary mechanism of the central stalk subunits to proton translocation. In vivo, can only synthesize ATP although its ATP hydrolase activity can be activated artificially in vitro. May be essential for the assembly of F(1) and may play an important role in the incorporation of the hydrophobic subunit c into the F(1)-c oligomer rotor of the mitochondrial ATP synthase complex. The protein is ATP synthase F(1) complex subunit epsilon, mitochondrial of Rattus norvegicus (Rat).